The sequence spans 1184 residues: DNA-directed RNA polymerase subunit beta (1184 aa).

The interval 1160–1184 (DDDFTNQNDAFNIVQPENAAAEKTE) is disordered.

This sequence belongs to the RNA polymerase beta chain family. The RNAP catalytic core consists of 2 alpha, 1 beta, 1 beta' and 1 omega subunit. When a sigma factor is associated with the core the holoenzyme is formed, which can initiate transcription.

The enzyme catalyses RNA(n) + a ribonucleoside 5'-triphosphate = RNA(n+1) + diphosphate. In terms of biological role, DNA-dependent RNA polymerase catalyzes the transcription of DNA into RNA using the four ribonucleoside triphosphates as substrates. This Listeria monocytogenes serotype 4b (strain F2365) protein is DNA-directed RNA polymerase subunit beta.